The primary structure comprises 233 residues: Germin-like protein (233 aa).

The N-terminal stretch at M1–A22 is a signal peptide. The cysteines at positions 32 and 49 are disulfide-linked. The region spanning R63–S215 is the Cupin type-1 domain. H111, H113, E118, and H162 together coordinate Mn(2+).

Belongs to the germin family. As to quaternary structure, oligomer (believed to be a pentamer but probably hexamer). As to expression, expressed at high levels in unstressed roots.

Its subcellular location is the secreted. It localises to the extracellular space. It is found in the apoplast. May be involved in seed germination. The polypeptide is Germin-like protein (Mesembryanthemum crystallinum (Common ice plant)).